Reading from the N-terminus, the 309-residue chain is UPF0252 protein PH0672 (309 aa).

The next 2 helical transmembrane spans lie at 5–25 (SVII…NESI) and 106–126 (AVLT…LMIF).

It belongs to the UPF0252 family.

Its subcellular location is the cell membrane. The protein is UPF0252 protein PH0672 of Pyrococcus horikoshii (strain ATCC 700860 / DSM 12428 / JCM 9974 / NBRC 100139 / OT-3).